The following is a 433-amino-acid chain: Probable RNA 3'-terminal phosphate cyclase (433 aa).

Residues 1-10 (MGKNKNYNKN) are compositionally biased toward low complexity. The disordered stretch occupies residues 1-28 (MGKNKNYNKNQFKKSKTNNDTTVAQQQQ). Residues 18–28 (NNDTTVAQQQQ) show a composition bias toward polar residues. ATP-binding positions include Gln-137 and 328-332 (YLQDQ). Residue His-354 is the Tele-AMP-histidine intermediate of the active site. The interval 400-433 (LNNNNNNSNSNTTTTTTTTTISTTTIDNQNSEEK) is disordered. Positions 401–425 (NNNNNNSNSNTTTTTTTTTISTTTI) are enriched in low complexity.

This sequence belongs to the RNA 3'-terminal cyclase family. Type 1 subfamily.

It is found in the nucleus. The protein localises to the nucleoplasm. The catalysed reaction is a 3'-end 3'-phospho-ribonucleotide-RNA + ATP = a 3'-end 2',3'-cyclophospho-ribonucleotide-RNA + AMP + diphosphate. Its function is as follows. Catalyzes the conversion of 3'-phosphate to a 2',3'-cyclic phosphodiester at the end of RNA. The mechanism of action of the enzyme occurs in 3 steps: (A) adenylation of the enzyme by ATP; (B) transfer of adenylate to an RNA-N3'P to produce RNA-N3'PP5'A; (C) and attack of the adjacent 2'-hydroxyl on the 3'-phosphorus in the diester linkage to produce the cyclic end product. The biological role of this enzyme is unknown but it is likely to function in some aspects of cellular RNA processing. This is Probable RNA 3'-terminal phosphate cyclase (rtca) from Dictyostelium discoideum (Social amoeba).